A 618-amino-acid polypeptide reads, in one-letter code: Elongation factor 4 (618 aa).

Residues Ala17–Glu198 form the tr-type G domain. Residues Asp29–Thr34 and Asn145–Asp148 contribute to the GTP site.

The protein belongs to the TRAFAC class translation factor GTPase superfamily. Classic translation factor GTPase family. LepA subfamily.

The protein localises to the cell membrane. It carries out the reaction GTP + H2O = GDP + phosphate + H(+). In terms of biological role, required for accurate and efficient protein synthesis under certain stress conditions. May act as a fidelity factor of the translation reaction, by catalyzing a one-codon backward translocation of tRNAs on improperly translocated ribosomes. Back-translocation proceeds from a post-translocation (POST) complex to a pre-translocation (PRE) complex, thus giving elongation factor G a second chance to translocate the tRNAs correctly. Binds to ribosomes in a GTP-dependent manner. This Pseudarthrobacter chlorophenolicus (strain ATCC 700700 / DSM 12829 / CIP 107037 / JCM 12360 / KCTC 9906 / NCIMB 13794 / A6) (Arthrobacter chlorophenolicus) protein is Elongation factor 4.